The chain runs to 268 residues: Imidazole glycerol phosphate synthase subunit HisF (268 aa).

Active-site residues include Asp-12 and Asp-131.

Belongs to the HisA/HisF family. Heterodimer of HisH and HisF.

It is found in the cytoplasm. The enzyme catalyses 5-[(5-phospho-1-deoxy-D-ribulos-1-ylimino)methylamino]-1-(5-phospho-beta-D-ribosyl)imidazole-4-carboxamide + L-glutamine = D-erythro-1-(imidazol-4-yl)glycerol 3-phosphate + 5-amino-1-(5-phospho-beta-D-ribosyl)imidazole-4-carboxamide + L-glutamate + H(+). The protein operates within amino-acid biosynthesis; L-histidine biosynthesis; L-histidine from 5-phospho-alpha-D-ribose 1-diphosphate: step 5/9. IGPS catalyzes the conversion of PRFAR and glutamine to IGP, AICAR and glutamate. The HisF subunit catalyzes the cyclization activity that produces IGP and AICAR from PRFAR using the ammonia provided by the HisH subunit. The polypeptide is Imidazole glycerol phosphate synthase subunit HisF (Methanoculleus marisnigri (strain ATCC 35101 / DSM 1498 / JR1)).